The sequence spans 514 residues: 3-octaprenyl-4-hydroxybenzoate carboxy-lyase (514 aa).

Mn(2+) is bound at residue Asn177. Prenylated FMN is bound by residues 180–182, 194–196, and 199–200; these read IYR, RWL, and RG. Position 243 (Glu243) interacts with Mn(2+). Asp314 serves as the catalytic Proton donor.

The protein belongs to the UbiD family. As to quaternary structure, homohexamer. Prenylated FMN serves as cofactor. Requires Mn(2+) as cofactor.

It is found in the cell membrane. It carries out the reaction a 4-hydroxy-3-(all-trans-polyprenyl)benzoate + H(+) = a 2-(all-trans-polyprenyl)phenol + CO2. Its pathway is cofactor biosynthesis; ubiquinone biosynthesis. Functionally, catalyzes the decarboxylation of 3-octaprenyl-4-hydroxy benzoate to 2-octaprenylphenol, an intermediate step in ubiquinone biosynthesis. This Bordetella pertussis (strain Tohama I / ATCC BAA-589 / NCTC 13251) protein is 3-octaprenyl-4-hydroxybenzoate carboxy-lyase.